The following is a 107-amino-acid chain: Nucleoid-associated protein HNE_0371 (107 aa).

This sequence belongs to the YbaB/EbfC family. In terms of assembly, homodimer.

It is found in the cytoplasm. It localises to the nucleoid. Its function is as follows. Binds to DNA and alters its conformation. May be involved in regulation of gene expression, nucleoid organization and DNA protection. In Hyphomonas neptunium (strain ATCC 15444), this protein is Nucleoid-associated protein HNE_0371.